Reading from the N-terminus, the 185-residue chain is Ribosome-recycling factor (185 aa).

The protein belongs to the RRF family.

It is found in the cytoplasm. Its function is as follows. Responsible for the release of ribosomes from messenger RNA at the termination of protein biosynthesis. May increase the efficiency of translation by recycling ribosomes from one round of translation to another. This chain is Ribosome-recycling factor, found in Aliivibrio fischeri (strain ATCC 700601 / ES114) (Vibrio fischeri).